A 259-amino-acid polypeptide reads, in one-letter code: uncharacterized protein (259 aa).

This is an uncharacterized protein from Bacillus anthracis.